The sequence spans 293 residues: 4-hydroxy-tetrahydrodipicolinate synthase (293 aa).

Threonine 47 provides a ligand contact to pyruvate. The active-site Proton donor/acceptor is the tyrosine 136. The Schiff-base intermediate with substrate role is filled by lysine 164. Isoleucine 206 contacts pyruvate.

This sequence belongs to the DapA family. In terms of assembly, homotetramer; dimer of dimers.

It localises to the cytoplasm. It carries out the reaction L-aspartate 4-semialdehyde + pyruvate = (2S,4S)-4-hydroxy-2,3,4,5-tetrahydrodipicolinate + H2O + H(+). Its pathway is amino-acid biosynthesis; L-lysine biosynthesis via DAP pathway; (S)-tetrahydrodipicolinate from L-aspartate: step 3/4. Functionally, catalyzes the condensation of (S)-aspartate-beta-semialdehyde [(S)-ASA] and pyruvate to 4-hydroxy-tetrahydrodipicolinate (HTPA). The sequence is that of 4-hydroxy-tetrahydrodipicolinate synthase from Listeria monocytogenes serotype 4b (strain CLIP80459).